An 860-amino-acid chain; its full sequence is MRFTLIEAVALTAVSLASADELAYSPPYYPSPWANGQGDWAQAYQRAVDIVSQMTLAEKVNLTTGTGWELELCVGQTGGVPRLGVPGMCLQDSPLGVRDSDYNSAFPSGMNVAATWDKNLAYLRGKAMGQEFSDKGADIQLGPAAGPLGRSPDGGRNWEGFSPDPALSGVLFAETIKGIQDAGVVATAKHYIAYEQEHFRQAPEAQGYGFNISESGSANLDDKTMHELYLWPFADAIRAGAGAVMCSYNQINNSYGCQNSYTLNKLLKAELGFQGFVMSDWAAHHAGVSGALAGLDMSMPGDVDYDSGTSYWGTNLTVSVLNGTVPQWRVDDMAVRIMAAYYKVGRDRLWTPPNFSSWTRDEYGYKYYYVSEGPYEKVNHYVNVQRNHSELIRRIGADSTVLLKNDGALPLTGKERLVALIGEDAGSNPYGANGCSDRGCDNGTLAMGWGSGTANFPYLVTPEQAISNEVLKNKNGVFTATDNWAIDQIEALAKTASVSLVFVNADSGEGYINVDGNLGDRRNLTLWRNGDNVIKAAASNCNNTIVIIHSVGPVLVNEWYDNPNVTAILWGGLPGQESGNSLADVLYGRVNPGAKSPFTWGKTREAYQDYLVTEPNNGNGAPQEDFVEGVFIDYRGFDKRNETPIYEFGYGLSYTTFNYSNLEVQVLSAPAYEPASGETEAAPTFGEVGNASNYLYPDGLQKITKFIYPWLNSTDLEASSGDASYGQDSSDYLPEGATDGSAQPILPAGGGPGGNPRLYDELIRVSVTIKNTGKVAGDEVPQLYVSLGGPNEPKIVLRQFERITLQPSEETKWSTTLTRRDLANWNVEKQDWEITSYPKMVFVGSSSRKLPLRASLPTVH.

Positions 1 to 19 (MRFTLIEAVALTAVSLASA) are cleaved as a signal peptide. N-linked (GlcNAc...) asparagine glycosylation is found at Asn61, Asn211, and Asn252. Asp280 is an active-site residue. N-linked (GlcNAc...) asparagine glycans are attached at residues Asn315, Asn322, Asn354, Asn387, Asn442, Asn523, Asn542, Asn564, Asn658, Asn690, and Asn712. Residues 719–753 (SSGDASYGQDSSDYLPEGATDGSAQPILPAGGGPG) are disordered.

Belongs to the glycosyl hydrolase 3 family.

The protein localises to the secreted. It carries out the reaction Hydrolysis of terminal, non-reducing beta-D-glucosyl residues with release of beta-D-glucose.. It functions in the pathway glycan metabolism; cellulose degradation. Its function is as follows. Beta-glucosidases are one of a number of cellulolytic enzymes involved in the degradation of cellulosic biomass. Catalyzes the last step releasing glucose from the inhibitory cellobiose. This is Beta-glucosidase A (bglA) from Aspergillus kawachii (strain NBRC 4308) (White koji mold).